The primary structure comprises 257 residues: 5-oxoprolinase subunit A (257 aa).

The protein belongs to the LamB/PxpA family. As to quaternary structure, forms a complex composed of PxpA, PxpB and PxpC.

It carries out the reaction 5-oxo-L-proline + ATP + 2 H2O = L-glutamate + ADP + phosphate + H(+). Functionally, catalyzes the cleavage of 5-oxoproline to form L-glutamate coupled to the hydrolysis of ATP to ADP and inorganic phosphate. This Halalkalibacterium halodurans (strain ATCC BAA-125 / DSM 18197 / FERM 7344 / JCM 9153 / C-125) (Bacillus halodurans) protein is 5-oxoprolinase subunit A.